Consider the following 1708-residue polypeptide: Clathrin heavy chain 1 (1708 aa).

Residues 1–492 (MAAANAPIAM…VDNDLALKIY (492 aa)) are globular terminal domain. WD40-like repeat regions lie at residues 25-67 (FVTF…RPIT), 68-113 (ADSA…MPEQ), 114-155 (VVFW…ANLA), 156-205 (NNQI…QALE), 206-270 (AHAA…PDFQ), 271-314 (DDFP…ISPD), and 315-343 (PIFLTAESSASGGFYAINRRGQVLHATVN). The segment at 462-478 (ENWLAEDKLECSEELGD) is binding site for the uncoating ATPase, involved in lattice disassembly. A flexible linker region spans residues 493 to 536 (IKARATPKVVAAFAERREFDKILIYSKQVGYTPDYLFLLQTILR). The segment at 537 to 648 (TDPQGAVNFA…RALQHYTELP (112 aa)) is distal segment. A heavy chain arm region spans residues 537 to 1708 (TDPQGAVNFA…AYGMPPMGSY (1172 aa)). CHCR repeat units follow at residues 551–697 (QMEG…QIVV), 700–842 (AKEY…PEDF), 847–986 (ILSV…QLID), 993–1138 (LPES…VSEA), 1142–1283 (FIRA…FRLA), 1288–1434 (LNII…DLIN), and 1437–1580 (LNVL…KECF). A proximal segment region spans residues 653 to 1708 (VMVNTHAIEP…AYGMPPMGSY (1056 aa)). The tract at residues 1227-1536 (AAKIIYAFIS…YIYKKAGRWK (310 aa)) is involved in binding clathrin light chain. The segment at 1564–1708 (SEDLLVYFIE…AYGMPPMGSY (145 aa)) is trimerization.

It belongs to the clathrin heavy chain family. As to quaternary structure, clathrin triskelions, composed of 3 heavy chains and 3 light chains, are the basic subunits of the clathrin coat.

It localises to the cytoplasmic vesicle membrane. It is found in the membrane. Its subcellular location is the coated pit. In terms of biological role, clathrin is the major protein of the polyhedral coat of coated pits and vesicles. The polypeptide is Clathrin heavy chain 1 (Oryza sativa subsp. japonica (Rice)).